We begin with the raw amino-acid sequence, 948 residues long: Isoleucine--tRNA ligase (948 aa).

Positions 58–68 (PYANGDIHIGH) match the 'HIGH' region motif. Glutamate 566 provides a ligand contact to L-isoleucyl-5'-AMP. Positions 607–611 (KMSKS) match the 'KMSKS' region motif. Lysine 610 contributes to the ATP binding site. Zn(2+)-binding residues include cysteine 911, cysteine 914, cysteine 931, and cysteine 934.

The protein belongs to the class-I aminoacyl-tRNA synthetase family. IleS type 1 subfamily. In terms of assembly, monomer. Requires Zn(2+) as cofactor.

The protein localises to the cytoplasm. It catalyses the reaction tRNA(Ile) + L-isoleucine + ATP = L-isoleucyl-tRNA(Ile) + AMP + diphosphate. Functionally, catalyzes the attachment of isoleucine to tRNA(Ile). As IleRS can inadvertently accommodate and process structurally similar amino acids such as valine, to avoid such errors it has two additional distinct tRNA(Ile)-dependent editing activities. One activity is designated as 'pretransfer' editing and involves the hydrolysis of activated Val-AMP. The other activity is designated 'posttransfer' editing and involves deacylation of mischarged Val-tRNA(Ile). The sequence is that of Isoleucine--tRNA ligase from Vibrio vulnificus (strain YJ016).